We begin with the raw amino-acid sequence, 442 residues long: Cyclic adenylate deaminase (442 aa).

This sequence belongs to the metallo-dependent hydrolases superfamily. Adenosine and AMP deaminases family. It depends on Zn(2+) as a cofactor.

The catalysed reaction is 3',5'-cyclic AMP + H2O + H(+) = 3',5'-cyclic IMP + NH4(+). Its function is as follows. Deaminates cAMP into cIMP, thereby repressing cAMP dependent metabolism or genes. This is Cyclic adenylate deaminase (add) from Leptospira interrogans serogroup Icterohaemorrhagiae serovar copenhageni (strain Fiocruz L1-130).